The sequence spans 583 residues: CTP synthase (583 aa).

The amidoligase domain stretch occupies residues 1 to 278 (MRKHPQTATK…DAYVVRRLNL (278 aa)). Serine 20 is a CTP binding site. Serine 20 lines the UTP pocket. ATP contacts are provided by residues 21-26 (SLGKGL) and aspartate 78. Aspartate 78 and glutamate 152 together coordinate Mg(2+). CTP-binding positions include 159-161 (DIE), 199-204 (KTKPTQ), and lysine 235. Residues 199–204 (KTKPTQ) and lysine 235 each bind UTP. A Glutamine amidotransferase type-1 domain is found at 303–551 (RIALVGKYVE…VGAAMDYKAG (249 aa)). L-glutamine is bound at residue glycine 366. Cysteine 393 (nucleophile; for glutamine hydrolysis) is an active-site residue. L-glutamine-binding positions include 394–397 (LGLQ), glutamate 416, and arginine 477. Catalysis depends on residues histidine 524 and glutamate 526. Residues 560–583 (EQSSNGIQHRDSAARPIPEPAARG) form a disordered region.

Belongs to the CTP synthase family. Homotetramer.

It carries out the reaction UTP + L-glutamine + ATP + H2O = CTP + L-glutamate + ADP + phosphate + 2 H(+). It catalyses the reaction L-glutamine + H2O = L-glutamate + NH4(+). The enzyme catalyses UTP + NH4(+) + ATP = CTP + ADP + phosphate + 2 H(+). The protein operates within pyrimidine metabolism; CTP biosynthesis via de novo pathway; CTP from UDP: step 2/2. Its activity is regulated as follows. Allosterically activated by GTP, when glutamine is the substrate; GTP has no effect on the reaction when ammonia is the substrate. The allosteric effector GTP functions by stabilizing the protein conformation that binds the tetrahedral intermediate(s) formed during glutamine hydrolysis. Inhibited by the product CTP, via allosteric rather than competitive inhibition. Catalyzes the ATP-dependent amination of UTP to CTP with either L-glutamine or ammonia as the source of nitrogen. Regulates intracellular CTP levels through interactions with the four ribonucleotide triphosphates. This is CTP synthase from Mycolicibacterium paratuberculosis (strain ATCC BAA-968 / K-10) (Mycobacterium paratuberculosis).